A 220-amino-acid polypeptide reads, in one-letter code: Lactate utilization protein C (220 aa).

Belongs to the LutC/YkgG family.

Functionally, is involved in L-lactate degradation and allows cells to grow with lactate as the sole carbon source. This chain is Lactate utilization protein C, found in Anoxybacillus flavithermus (strain DSM 21510 / WK1).